We begin with the raw amino-acid sequence, 116 residues long: Histone H2B (116 aa).

A compositionally biased stretch (basic residues) spans 1–11 (TSGKAAKKAGK). A disordered region spans residues 1-25 (TSGKAAKKAGKAQKSITKGDKKKRK). An N6-acetyllysine mark is found at Lys-4, Lys-11, and Lys-14. The O-linked (GlcNAc) serine glycan is linked to Ser-103. Lys-111 is covalently cross-linked (Glycyl lysine isopeptide (Lys-Gly) (interchain with G-Cter in ubiquitin)).

As to quaternary structure, the nucleosome is a histone octamer containing two molecules each of H2A, H2B, H3 and H4 assembled in one H3-H4 heterotetramer and two H2A-H2B heterodimers. The octamer wraps approximately 147 bp of DNA. In terms of processing, monoubiquitination gives a specific tag for epigenetic transcriptional activation and is also prerequisite for histone H3 'Lys-4' and 'Lys-79' methylation. GlcNAcylation at Ser-103 promotes monoubiquitination of Lys-111. It fluctuates in response to extracellular glucose, and associates with transcribed genes.

The protein localises to the nucleus. It is found in the chromosome. Core component of nucleosome. Nucleosomes wrap and compact DNA into chromatin, limiting DNA accessibility to the cellular machineries which require DNA as a template. Histones thereby play a central role in transcription regulation, DNA repair, DNA replication and chromosomal stability. DNA accessibility is regulated via a complex set of post-translational modifications of histones, also called histone code, and nucleosome remodeling. Functionally, a mixture of histones H2B and H4 has antimicrobial activity against the Gram-positive bacterium M.luteus. The sequence is that of Histone H2B from Penaeus vannamei (Whiteleg shrimp).